The primary structure comprises 357 residues: MRAVSQTSPNRLAEALSSPHMLKEMLDLFGHEYLPVFEGEIKPHGPLGTSDSRAKRPLNAFMAFRTYYLKLFPDTQQKNASGFLTQLWGGDPHRNKWALIAKVYSFLRDQLGKGPVNLSAFLGIACPLMNMVEPSIYIEVLGWEQTAPQGIVTFQQNTDIMKANLARLFNVHPTTEIDLLTSILSAGYFTDFSQVLLMRMWACQNGIMTTTSATAGNNVATTQPLYESVPTTAEKVSFINAVRESRNLAAHDLFGPEYDAAFFGNRFVHSWEVQDLTSFQNVQISVADSPMESNTLYNFRMPSQCLPQVSEFDLYDVIDTSIIDISSAWSIDQYLHEKQSKMQQQCKYFLFRNSDCS.

A DNA-binding region (alpha box) is located at residues 53–108 (RAKRPLNAFMAFRTYYLKLFPDTQQKNASGFLTQLWGGDPHRNKWALIAKVYSFLR).

This sequence belongs to the MATALPHA1 family.

Its subcellular location is the nucleus. Functionally, mating type proteins are sequence specific DNA-binding proteins that act as master switches in fungal differentiation by controlling gene expression in a cell type-specific fashion. Transcriptional activator that induces the transcription of alpha-specific genes. This is Mating-type protein MAT-1 (MAT1) from Fusarium oxysporum (Fusarium vascular wilt).